The following is a 977-amino-acid chain: Probable RNA-dependent RNA polymerase 5 (977 aa).

The interval E103 to K122 is disordered.

The protein belongs to the RdRP family.

It catalyses the reaction RNA(n) + a ribonucleoside 5'-triphosphate = RNA(n+1) + diphosphate. Functionally, probably involved in the RNA silencing pathway and required for the generation of small interfering RNAs (siRNAs). In Arabidopsis thaliana (Mouse-ear cress), this protein is Probable RNA-dependent RNA polymerase 5 (RDR5).